A 320-amino-acid chain; its full sequence is Mitochondrial thiamine pyrophosphate carrier (320 aa).

Solcar repeat units lie at residues 13 to 106 (NTKL…LTEL), 116 to 202 (REFS…LKHL), and 214 to 309 (NENL…FCNV). A helical membrane pass occupies residues 19–39 (AVAGSVSGLVTRALISPFDVI). S51 carries the post-translational modification Phosphoserine. The next 4 helical transmembrane spans lie at 87–107 (ILSIGYGAVQFLSFEMLTELV), 122–142 (FVCGGLAACTATLTVHPVDVL), 173–193 (VFYKGLAPTLIAIFPYAGLQF), and 220–240 (LLCGSGAGVISKTLTYPLDLF). The Substrate recognition signature appears at 241-246 (KKRLQV). A helical transmembrane segment spans residues 293-313 (ALSTGFMFFWYEFFCNVFHCM).

This sequence belongs to the mitochondrial carrier (TC 2.A.29) family.

The protein resides in the mitochondrion membrane. The enzyme catalyses thiamine phosphate(out) + thiamine diphosphate(in) = thiamine phosphate(in) + thiamine diphosphate(out). Its function is as follows. Mitochondrial transporter mediating uptake of thiamine diphosphate into mitochondria. It is not clear if the antiporter activity is affected by the membrane potential or by the proton electrochemical gradient. This chain is Mitochondrial thiamine pyrophosphate carrier (SLC25A19), found in Macaca fascicularis (Crab-eating macaque).